The sequence spans 752 residues: Primary amine oxidase (752 aa).

A signal peptide spans 1 to 27; it reads MAILSPRKTALALAVALSCAWQSPAFA. Substrate-binding positions include 408–419 and 490–495; these read YLDSGDYGMGTL and VGNYDY. Catalysis depends on aspartate 410, which acts as the Proton acceptor. Tyrosine 493 acts as the Schiff-base intermediate with substrate; via topaquinone in catalysis. Tyrosine 493 is modified (2',4',5'-topaquinone). Cu cation-binding residues include histidine 551 and histidine 553. Aspartate 560, leucine 561, aspartate 562, glutamate 600, tyrosine 694, aspartate 697, glutamate 699, and aspartate 705 together coordinate Ca(2+). Residue aspartate 560 coordinates Mn(2+). Mn(2+) is bound at residue aspartate 562. Residue aspartate 705 coordinates Mn(2+). Residue histidine 716 participates in Cu cation binding.

This sequence belongs to the copper/topaquinone oxidase family. In terms of assembly, homodimer. Requires Cu cation as cofactor. The cofactor is Ca(2+). L-topaquinone serves as cofactor. It depends on Mn(2+) as a cofactor. In terms of processing, topaquinone (TPQ) is generated by copper-dependent autoxidation of a specific tyrosyl residue.

Its subcellular location is the periplasm. It catalyses the reaction a primary methyl amine + O2 + H2O = an aldehyde + H2O2 + NH4(+). Active on tyramine, tryptamine, beta-phenethylamine and dopamine. In Klebsiella michiganensis (strain ATCC 8724 / DSM 4798 / JCM 20051 / NBRC 3318 / NRRL B-199 / KCTC 1686 / BUCSAV 143 / CCM 1901), this protein is Primary amine oxidase (maoA).